The primary structure comprises 328 residues: Hairy/enhancer-of-split related with YRPW motif-like protein (328 aa).

The interval 1 to 54 (MKRPREPSGSDSESDGPIDVGREGELSQMARPLSTPSPSQMQARKKRRGIIEKR) is disordered. The interval 42–111 (QARKKRRGII…GGTGFFDARA (70 aa)) is transcriptional repression and interaction with NCOR1 and SIN3A. Residues 43-98 (ARKKRRGIIEKRRRDRINSSLSELRRLVPTAFEKQGSSKLEKAEVLQMTVDHLKML) form the bHLH domain. The Orange domain maps to 116-153 (FRSIGFRECLTEVIRYLGVLEGPSSRADPVRIRLLSHL). The tract at residues 236–272 (LLPSRGASSTRRARPLERPAAPLPAAPSGRATRGSHM) is disordered.

It belongs to the HEY family. In terms of assembly, self-associates. Interacts with GATA4, GATA6, HES1, HEY1 and HEY2. Interacts with HDAC1, NCOR1 and SIN3A.

The protein resides in the nucleus. Functionally, downstream effector of Notch signaling which may be required for cardiovascular development. Transcriptional repressor which binds preferentially to the canonical E box sequence 5'-CACGTG-3'. Represses transcription by the cardiac transcriptional activators GATA4 and GATA6. This chain is Hairy/enhancer-of-split related with YRPW motif-like protein (HEYL), found in Bos taurus (Bovine).